Consider the following 275-residue polypeptide: NH(3)-dependent NAD(+) synthetase (275 aa).

Position 50 to 57 (50 to 57 (GISGGVDS)) interacts with ATP. Asp56 is a Mg(2+) binding site. Arg147 contributes to the deamido-NAD(+) binding site. ATP is bound at residue Thr167. Glu172 contacts Mg(2+). Deamido-NAD(+) is bound by residues Lys180 and Asp187. Positions 196 and 218 each coordinate ATP. Position 267 to 268 (267 to 268 (HK)) interacts with deamido-NAD(+).

Belongs to the NAD synthetase family. Homodimer.

It catalyses the reaction deamido-NAD(+) + NH4(+) + ATP = AMP + diphosphate + NAD(+) + H(+). Its pathway is cofactor biosynthesis; NAD(+) biosynthesis; NAD(+) from deamido-NAD(+) (ammonia route): step 1/1. Functionally, catalyzes the ATP-dependent amidation of deamido-NAD to form NAD. Uses ammonia as a nitrogen source. The chain is NH(3)-dependent NAD(+) synthetase from Pseudomonas putida (strain ATCC 700007 / DSM 6899 / JCM 31910 / BCRC 17059 / LMG 24140 / F1).